Consider the following 245-residue polypeptide: 1-(5-phosphoribosyl)-5-[(5-phosphoribosylamino)methylideneamino] imidazole-4-carboxamide isomerase (245 aa).

Asp-11 functions as the Proton acceptor in the catalytic mechanism. The active-site Proton donor is Asp-132.

Belongs to the HisA/HisF family.

It is found in the cytoplasm. The enzyme catalyses 1-(5-phospho-beta-D-ribosyl)-5-[(5-phospho-beta-D-ribosylamino)methylideneamino]imidazole-4-carboxamide = 5-[(5-phospho-1-deoxy-D-ribulos-1-ylimino)methylamino]-1-(5-phospho-beta-D-ribosyl)imidazole-4-carboxamide. It functions in the pathway amino-acid biosynthesis; L-histidine biosynthesis; L-histidine from 5-phospho-alpha-D-ribose 1-diphosphate: step 4/9. The polypeptide is 1-(5-phosphoribosyl)-5-[(5-phosphoribosylamino)methylideneamino] imidazole-4-carboxamide isomerase (Bacillus velezensis (strain DSM 23117 / BGSC 10A6 / LMG 26770 / FZB42) (Bacillus amyloliquefaciens subsp. plantarum)).